A 46-amino-acid chain; its full sequence is Protein PsbN (46 aa).

The chain crosses the membrane as a helical span at residues 10–30 (VAIAVLAALLGLTGFGVYTAF).

The protein belongs to the PsbN family.

The protein localises to the cellular thylakoid membrane. May play a role in photosystem I and II biogenesis. In Synechococcus sp. (strain WH7803), this protein is Protein PsbN.